The sequence spans 315 residues: MRKRARIIYNPTSGKEQFKRELPDALIKLEKAGYETSAYATEKIGDATLEAERAMHENYDVLIAAGGDGTLNEVVNGIAEKPNRPKLGVIPMGTVNDFGRALHIPNDIMGALDVIIEGHSTKVDIGKMNNRYFINLAAGGQLTQVSYETPSKLKSIVGPFAYYIKGFEMLPQMKAVDLRIEYDGNVFQGEALLFFLGLTNSMAGFEKLVPDAKLDDGYFTLIIVEKSNLAELGHIMTLASRGEHTKHPKVIYEKAKAINISSFTDLQLNVDGEYGGKLPANFLNLERHIDVFAPNDIVNEELINNDHVDDNLIEE.

The region spanning 1–132 (MRKRARIIYN…VDIGKMNNRY (132 aa)) is the DAGKc domain. ATP is bound by residues 10–14 (NPTSG), Thr41, 67–73 (GDGTLNE), and Thr94. Mg(2+)-binding residues include Lys213, Asp216, and Tyr218. Glu273 (proton acceptor) is an active-site residue.

It belongs to the diacylglycerol/lipid kinase family. Homodimer. Mg(2+) serves as cofactor.

The catalysed reaction is a 1,2-diacyl-sn-glycerol + ATP = a 1,2-diacyl-sn-glycero-3-phosphate + ADP + H(+). Catalyzes the phosphorylation of diacylglycerol (DAG) into phosphatidic acid. Is a key enzyme involved in the production of lipoteichoic acid by reintroducing DAG formed from the breakdown of membrane phospholipids into the phosphatidylglycerol biosynthetic pathway. The chain is Diacylglycerol kinase (dagK) from Staphylococcus aureus (strain MRSA252).